A 320-amino-acid chain; its full sequence is Phosphoribosylaminoimidazole-succinocarboxamide synthase (320 aa).

Residues 283 to 303 (ESDWDRNSPPPPLPESIAHQT) are disordered.

Belongs to the SAICAR synthetase family.

The catalysed reaction is 5-amino-1-(5-phospho-D-ribosyl)imidazole-4-carboxylate + L-aspartate + ATP = (2S)-2-[5-amino-1-(5-phospho-beta-D-ribosyl)imidazole-4-carboxamido]succinate + ADP + phosphate + 2 H(+). The protein operates within purine metabolism; IMP biosynthesis via de novo pathway; 5-amino-1-(5-phospho-D-ribosyl)imidazole-4-carboxamide from 5-amino-1-(5-phospho-D-ribosyl)imidazole-4-carboxylate: step 1/2. The polypeptide is Phosphoribosylaminoimidazole-succinocarboxamide synthase (Rhodopirellula baltica (strain DSM 10527 / NCIMB 13988 / SH1)).